We begin with the raw amino-acid sequence, 346 residues long: Biotin synthase (346 aa).

A Radical SAM core domain is found at lysine 38–threonine 256. [4Fe-4S] cluster is bound by residues cysteine 53, cysteine 57, and cysteine 60. Cysteine 97, cysteine 128, cysteine 188, and arginine 260 together coordinate [2Fe-2S] cluster.

This sequence belongs to the radical SAM superfamily. Biotin synthase family. Homodimer. [4Fe-4S] cluster is required as a cofactor. Requires [2Fe-2S] cluster as cofactor.

It catalyses the reaction (4R,5S)-dethiobiotin + (sulfur carrier)-SH + 2 reduced [2Fe-2S]-[ferredoxin] + 2 S-adenosyl-L-methionine = (sulfur carrier)-H + biotin + 2 5'-deoxyadenosine + 2 L-methionine + 2 oxidized [2Fe-2S]-[ferredoxin]. It functions in the pathway cofactor biosynthesis; biotin biosynthesis; biotin from 7,8-diaminononanoate: step 2/2. Catalyzes the conversion of dethiobiotin (DTB) to biotin by the insertion of a sulfur atom into dethiobiotin via a radical-based mechanism. This is Biotin synthase from Salmonella arizonae (strain ATCC BAA-731 / CDC346-86 / RSK2980).